A 171-amino-acid chain; its full sequence is Phosphopantetheine adenylyltransferase (171 aa).

Threonine 9 contributes to the substrate binding site. Residues threonine 9–phenylalanine 10 and histidine 17 each bind ATP. Substrate contacts are provided by lysine 41, leucine 73, and arginine 87. ATP contacts are provided by residues glycine 88 to arginine 90, glutamate 98, and tyrosine 123 to threonine 129.

This sequence belongs to the bacterial CoaD family. As to quaternary structure, homohexamer. Mg(2+) serves as cofactor.

Its subcellular location is the cytoplasm. It carries out the reaction (R)-4'-phosphopantetheine + ATP + H(+) = 3'-dephospho-CoA + diphosphate. It functions in the pathway cofactor biosynthesis; coenzyme A biosynthesis; CoA from (R)-pantothenate: step 4/5. Functionally, reversibly transfers an adenylyl group from ATP to 4'-phosphopantetheine, yielding dephospho-CoA (dPCoA) and pyrophosphate. This is Phosphopantetheine adenylyltransferase from Paraburkholderia phytofirmans (strain DSM 17436 / LMG 22146 / PsJN) (Burkholderia phytofirmans).